Consider the following 342-residue polypeptide: Pyridoxal 4-dehydrogenase (342 aa).

Asp56 is an active-site residue. Residue Tyr61 is the Proton donor of the active site. Lys86 is a catalytic residue. 245–255 (GVFNSGILAAP) contributes to the NADP(+) binding site.

Belongs to the aldo/keto reductase family. As to quaternary structure, homodimer.

The catalysed reaction is pyridoxal + NAD(+) = 4-pyridoxolactone + NADH + H(+). It functions in the pathway cofactor degradation; B6 vitamer degradation; 4-pyridoxate from pyridoxal: step 1/2. This Microbacterium luteolum (Aureobacterium luteolum) protein is Pyridoxal 4-dehydrogenase (pld1).